The sequence spans 496 residues: Aspartyl/glutamyl-tRNA(Asn/Gln) amidotransferase subunit B (496 aa).

Belongs to the GatB/GatE family. GatB subfamily. In terms of assembly, heterotrimer of A, B and C subunits.

It catalyses the reaction L-glutamyl-tRNA(Gln) + L-glutamine + ATP + H2O = L-glutaminyl-tRNA(Gln) + L-glutamate + ADP + phosphate + H(+). It carries out the reaction L-aspartyl-tRNA(Asn) + L-glutamine + ATP + H2O = L-asparaginyl-tRNA(Asn) + L-glutamate + ADP + phosphate + 2 H(+). Its function is as follows. Allows the formation of correctly charged Asn-tRNA(Asn) or Gln-tRNA(Gln) through the transamidation of misacylated Asp-tRNA(Asn) or Glu-tRNA(Gln) in organisms which lack either or both of asparaginyl-tRNA or glutaminyl-tRNA synthetases. The reaction takes place in the presence of glutamine and ATP through an activated phospho-Asp-tRNA(Asn) or phospho-Glu-tRNA(Gln). This chain is Aspartyl/glutamyl-tRNA(Asn/Gln) amidotransferase subunit B, found in Xanthobacter autotrophicus (strain ATCC BAA-1158 / Py2).